Consider the following 517-residue polypeptide: Salicyloyl-CoA 5-hydroxylase (517 aa).

The protein belongs to the aromatic-ring hydroxylase family. KMO subfamily.

The enzyme catalyses 2-hydroxybenzoyl-CoA + NADH + O2 + H(+) = 2,5-dihydroxybenzoyl-CoA + NAD(+) + H2O. Its function is as follows. Involved in the degradation of salicylate via a pathway involving coenzyme A derivative. Catalyzes the aromatic hydroxylation of salicylyl-CoA to yield gentisyl-CoA. The chain is Salicyloyl-CoA 5-hydroxylase from Streptomyces sp.